A 428-amino-acid chain; its full sequence is Enolase (428 aa).

Residue Gln163 participates in (2R)-2-phosphoglycerate binding. The active-site Proton donor is Glu205. Asp242, Glu285, and Asp312 together coordinate Mg(2+). Positions 337, 366, 367, and 388 each coordinate (2R)-2-phosphoglycerate. The active-site Proton acceptor is the Lys337.

It belongs to the enolase family. Requires Mg(2+) as cofactor.

Its subcellular location is the cytoplasm. The protein localises to the secreted. The protein resides in the cell surface. It catalyses the reaction (2R)-2-phosphoglycerate = phosphoenolpyruvate + H2O. It participates in carbohydrate degradation; glycolysis; pyruvate from D-glyceraldehyde 3-phosphate: step 4/5. Its function is as follows. Catalyzes the reversible conversion of 2-phosphoglycerate (2-PG) into phosphoenolpyruvate (PEP). It is essential for the degradation of carbohydrates via glycolysis. This is Enolase from Persephonella marina (strain DSM 14350 / EX-H1).